Here is a 78-residue protein sequence, read N- to C-terminus: Exodeoxyribonuclease 7 small subunit (78 aa).

The protein belongs to the XseB family. In terms of assembly, heterooligomer composed of large and small subunits.

It localises to the cytoplasm. It catalyses the reaction Exonucleolytic cleavage in either 5'- to 3'- or 3'- to 5'-direction to yield nucleoside 5'-phosphates.. In terms of biological role, bidirectionally degrades single-stranded DNA into large acid-insoluble oligonucleotides, which are then degraded further into small acid-soluble oligonucleotides. The sequence is that of Exodeoxyribonuclease 7 small subunit from Psychromonas ingrahamii (strain DSM 17664 / CCUG 51855 / 37).